We begin with the raw amino-acid sequence, 402 residues long: UDP-glucose 6-dehydrogenase (402 aa).

NAD(+)-binding positions include 2–19 (KIAVAGSGYVGLSLGVLL), Val11, Asp29, Lys34, Thr83, Thr118, and Glu145. Substrate-binding positions include 141–145 (EFLRE), Lys204, Asn208, 249–253 (YNNPS), and Gly257. Tyr259 lines the NAD(+) pocket. Cys260 functions as the Nucleophile in the catalytic mechanism. Residue Lys263 participates in NAD(+) binding. Lys320 lines the substrate pocket. NAD(+) is bound at residue Arg327.

Belongs to the UDP-glucose/GDP-mannose dehydrogenase family.

The enzyme catalyses UDP-alpha-D-glucose + 2 NAD(+) + H2O = UDP-alpha-D-glucuronate + 2 NADH + 3 H(+). The protein operates within nucleotide-sugar biosynthesis; UDP-alpha-D-glucuronate biosynthesis; UDP-alpha-D-glucuronate from UDP-alpha-D-glucose: step 1/1. Catalyzes the formation of UDP-glucuronic acid which is required for capsular hyaluronic acid synthesis. In Streptococcus pyogenes serotype M3 (strain ATCC BAA-595 / MGAS315), this protein is UDP-glucose 6-dehydrogenase (hasB).